A 485-amino-acid chain; its full sequence is Ribulose bisphosphate carboxylase large chain 2 (485 aa).

Substrate contacts are provided by asparagine 125 and threonine 175. Residue lysine 177 is the Proton acceptor of the active site. Lysine 179 serves as a coordination point for substrate. Residues lysine 203, aspartate 205, and glutamate 206 each contribute to the Mg(2+) site. Lysine 203 is modified (N6-carboxylysine). Catalysis depends on histidine 295, which acts as the Proton acceptor. Substrate-binding residues include arginine 296, histidine 328, and serine 380.

This sequence belongs to the RuBisCO large chain family. Type I subfamily. In terms of assembly, heterohexadecamer of 8 large chains and 8 small chains. The cofactor is Mg(2+).

The enzyme catalyses 2 (2R)-3-phosphoglycerate + 2 H(+) = D-ribulose 1,5-bisphosphate + CO2 + H2O. It catalyses the reaction D-ribulose 1,5-bisphosphate + O2 = 2-phosphoglycolate + (2R)-3-phosphoglycerate + 2 H(+). In terms of biological role, ruBisCO catalyzes two reactions: the carboxylation of D-ribulose 1,5-bisphosphate, the primary event in carbon dioxide fixation, as well as the oxidative fragmentation of the pentose substrate. Both reactions occur simultaneously and in competition at the same active site. In Methylibium petroleiphilum (strain ATCC BAA-1232 / LMG 22953 / PM1), this protein is Ribulose bisphosphate carboxylase large chain 2.